Here is a 461-residue protein sequence, read N- to C-terminus: Coagulation factor IX (461 aa).

The signal sequence occupies residues 1–28; sequence MQRVNMIMAESPGLITICLLGYLLSAEC. The propeptide occupies 29–46; the sequence is TVFLDHENANKILNRPKR. Ca(2+) contacts are provided by Y47, N48, E53, E54, E61, E63, E66, E67, E72, E73, and E76. The Gla domain maps to 47–92; it reads YNSGKLEEFVQGNLERECMEEKCSFEEAREVFENTERTTEFWKQYV. Residues E53, E54, E61, E63, E66, E67, E72, E73, E76, E79, and E82 each carry the 4-carboxyglutamate modification. E61 contributes to the Mg(2+) binding site. The cysteines at positions 64 and 69 are disulfide-linked. E66 serves as a coordination point for Mg(2+). E72 is a Mg(2+) binding site. Mg(2+) is bound at residue E76. Ca(2+) is bound at residue E82. Position 82 (E82) interacts with Mg(2+). O-linked (GalNAc...) threonine glycosylation occurs at T85. Ca(2+) is bound by residues E86, D93, G94, and Q96. 4-carboxyglutamate is present on E86. E86 contacts Mg(2+). Residues 93 to 129 form the EGF-like 1; calcium-binding domain; it reads DGDQCESNPCLNGGSCKDDINSYECWCPFGFEGKNCE. Intrachain disulfides connect C97-C108, C102-C117, C119-C128, C134-C145, C141-C155, C157-C170, C178-C335, C252-C268, C382-C396, and C407-C435. An O-linked (Glc...) serine glycan is attached at S99. S107 carries O-linked (Fuc...) serine glycosylation. Ca(2+)-binding residues include D110 and D111. Position 110 is a (3R)-3-hydroxyaspartate (D110). S114 carries the post-translational modification Phosphoserine. The EGF-like 2 domain occupies 130–171; that stretch reads LDVTCNIKNGRCEQFCKNSADNKVVCSCTEGYRLAENQKSCE. Residues 192-226 constitute a propeptide, activation peptide; it reads AETVFPDVDYVNSTEAETILDNITQSTQSFNDFTR. Y201 is modified (sulfotyrosine). N-linked (GlcNAc...) asparagine glycosylation is present at N203. S204 carries the phosphoserine modification. T205 is modified (phosphothreonine; alternate). The O-linked (GalNAc...) threonine; alternate glycan is linked to T205. N213 carries an N-linked (GlcNAc...) asparagine glycan. 2 O-linked (GalNAc...) threonine glycosylation sites follow: T215 and T225. Residues 227–459 form the Peptidase S1 domain; the sequence is VVGGEDAKPG…YVNWIKEKTK (233 aa). H267 functions as the Charge relay system in the catalytic mechanism. E281, N283, E286, E288, and E291 together coordinate Ca(2+). D315 serves as the catalytic Charge relay system. The active-site Charge relay system is the S411.

This sequence belongs to the peptidase S1 family. Heterodimer of a light chain and a heavy chain; disulfide-linked. Interacts (inactive and activated) with F11 (activated) in calcium-dependent manner. Interacts with SERPINC1. Interacts (activated) with iripin-8, a serine protease inhibitor from Ixodes ricinus saliva. Interacts (inactive and activated) with nitrophorin-2, an anticoagulant protein from Rhodnius prolixus. In terms of processing, activated by factor XIa, which excises the activation peptide. The propeptide can also be removed by snake venom protease. Activated by coagulation factor VIIa-tissue factor (F7-F3) complex in calcium-dependent manner. Post-translationally, the iron and 2-oxoglutarate dependent 3-hydroxylation of aspartate and asparagine is (R) stereospecific within EGF domains. In terms of tissue distribution, detected in blood plasma (at protein level). Synthesized primarily in the liver and secreted in plasma.

The protein localises to the secreted. It catalyses the reaction Selective cleavage of Arg-|-Ile bond in factor X to form factor Xa.. In terms of biological role, factor IX is a vitamin K-dependent plasma protein that participates in the intrinsic pathway of blood coagulation by converting factor X to its active form in the presence of Ca(2+) ions, phospholipids, and factor VIIIa. The chain is Coagulation factor IX (F9) from Homo sapiens (Human).